We begin with the raw amino-acid sequence, 698 residues long: Polyribonucleotide nucleotidyltransferase (698 aa).

Residues aspartate 488 and aspartate 494 each contribute to the Mg(2+) site. In terms of domain architecture, KH spans 555–614; it reads PRLLTIRIDPDKIRDVIGKGGATIRALTEETGTTIDISDDGKVTIASADKAAADEARRRI. The S1 motif domain maps to 624-692; that stretch reads GTVYEGKVSK…RQGRIRLSMK (69 aa).

This sequence belongs to the polyribonucleotide nucleotidyltransferase family. As to quaternary structure, component of the RNA degradosome, which is a multiprotein complex involved in RNA processing and mRNA degradation. Requires Mg(2+) as cofactor.

Its subcellular location is the cytoplasm. It carries out the reaction RNA(n+1) + phosphate = RNA(n) + a ribonucleoside 5'-diphosphate. Involved in mRNA degradation. Catalyzes the phosphorolysis of single-stranded polyribonucleotides processively in the 3'- to 5'-direction. This is Polyribonucleotide nucleotidyltransferase from Alkalilimnicola ehrlichii (strain ATCC BAA-1101 / DSM 17681 / MLHE-1).